The following is a 255-amino-acid chain: tRNA pseudouridine synthase B (255 aa).

Asp58 acts as the Nucleophile in catalysis.

This sequence belongs to the pseudouridine synthase TruB family. Type 1 subfamily.

The enzyme catalyses uridine(55) in tRNA = pseudouridine(55) in tRNA. Functionally, responsible for synthesis of pseudouridine from uracil-55 in the psi GC loop of transfer RNAs. This Chlorobium chlorochromatii (strain CaD3) protein is tRNA pseudouridine synthase B.